The chain runs to 20 residues: Cytochrome c oxidase subunit 5B heart, mitochondrial (20 aa).

A disordered region spans residues 1 to 20; the sequence is XXLKGIPTDEEQATGLEEYA.

It belongs to the cytochrome c oxidase subunit 5B family. In terms of assembly, component of the cytochrome c oxidase (complex IV, CIV), a multisubunit enzyme composed of 14 subunits. The complex is composed of a catalytic core of 3 subunits MT-CO1, MT-CO2 and MT-CO3, encoded in the mitochondrial DNA, and 11 supernumerary subunits COX4I, COX5A, COX5B, COX6A, COX6B, COX6C, COX7A, COX7B, COX7C, COX8 and NDUFA4, which are encoded in the nuclear genome. The complex exists as a monomer or a dimer and forms supercomplexes (SCs) in the inner mitochondrial membrane with NADH-ubiquinone oxidoreductase (complex I, CI) and ubiquinol-cytochrome c oxidoreductase (cytochrome b-c1 complex, complex III, CIII), resulting in different assemblies (supercomplex SCI(1)III(2)IV(1) and megacomplex MCI(2)III(2)IV(2)).

The protein resides in the mitochondrion inner membrane. It participates in energy metabolism; oxidative phosphorylation. In terms of biological role, component of the cytochrome c oxidase, the last enzyme in the mitochondrial electron transport chain which drives oxidative phosphorylation. The respiratory chain contains 3 multisubunit complexes succinate dehydrogenase (complex II, CII), ubiquinol-cytochrome c oxidoreductase (cytochrome b-c1 complex, complex III, CIII) and cytochrome c oxidase (complex IV, CIV), that cooperate to transfer electrons derived from NADH and succinate to molecular oxygen, creating an electrochemical gradient over the inner membrane that drives transmembrane transport and the ATP synthase. Cytochrome c oxidase is the component of the respiratory chain that catalyzes the reduction of oxygen to water. Electrons originating from reduced cytochrome c in the intermembrane space (IMS) are transferred via the dinuclear copper A center (CU(A)) of subunit 2 and heme A of subunit 1 to the active site in subunit 1, a binuclear center (BNC) formed by heme A3 and copper B (CU(B)). The BNC reduces molecular oxygen to 2 water molecules using 4 electrons from cytochrome c in the IMS and 4 protons from the mitochondrial matrix. The protein is Cytochrome c oxidase subunit 5B heart, mitochondrial of Oncorhynchus mykiss (Rainbow trout).